The primary structure comprises 494 residues: Alpha-amylase 2 (494 aa).

The N-terminal stretch at 1 to 18 is a signal peptide; that stretch reads MFLAKSIVCLALLAVANA. A disulfide bridge connects residues Cys-46 and Cys-102. Ca(2+)-binding residues include Asn-116, Arg-165, and Asp-174. A disulfide bridge links Cys-153 with Cys-167. A chloride-binding site is contributed by Arg-202. The active-site Nucleophile is the Asp-204. A Ca(2+)-binding site is contributed by His-208. Glu-241 serves as the catalytic Proton donor. 2 residues coordinate chloride: Asn-304 and Arg-343. Residues 350–370 are disordered; it reads FTDTDQGPPTTDGQNIASPSF. Residues 351–363 are compositionally biased toward low complexity; the sequence is TDTDQGPPTTDGQ. 2 cysteine pairs are disulfide-bonded: Cys-376-Cys-382 and Cys-448-Cys-460.

It belongs to the glycosyl hydrolase 13 family. Monomer. Requires Ca(2+) as cofactor. The cofactor is chloride.

The catalysed reaction is Endohydrolysis of (1-&gt;4)-alpha-D-glucosidic linkages in polysaccharides containing three or more (1-&gt;4)-alpha-linked D-glucose units.. In Drosophila ananassae (Fruit fly), this protein is Alpha-amylase 2 (Amy58).